We begin with the raw amino-acid sequence, 353 residues long: MAERGAHITTTSPLDDRPSIFEVVAQESLMAAARPALHHIVKVLAESNPARYGTLWRWFDELYTLLECLLQQHYLSWASASFSENFYGLKRVTLGKQVGQRNLARKEYWKSLLLLVLIPYLRIKLEKLVNSLREEEDYSIQNPTSFHKRCYKAILASYPFLKLGWEAWFLFYQLRYILWNGKHHSPLLRLAGVQLARLTMEDLRAMEKQEELTNTVSNVVSISQHIRSILKKALGAVTLSVSSSLSLGVFFLQFLDWWYSAENRETLKSLGNLPVPPPPIHFDLETYSPLLPKLRTVCPLCRKVRVNDTALGTSGYVFCYRCAYYYVKTHQRCPVSGYPTELQHLIKLYTPDG.

The Peroxisomal matrix segment spans residues Met-1–Ser-19. A helical transmembrane segment spans residues Ile-20–Ser-47. Topologically, residues Asn-48–Arg-51 are cytoplasmic. A helical transmembrane segment spans residues Tyr-52 to Ser-76. Over Trp-77–Ala-104 the chain is Peroxisomal matrix. The chain crosses the membrane as a helical span at residues Arg-105–Glu-134. At Glu-135–Ser-139 the chain is on the cytoplasmic side. A helical membrane pass occupies residues Ile-140 to Leu-178. At Trp-179–Ser-243 the chain is on the peroxisomal matrix side. A helical membrane pass occupies residues Ser-244–Gly-271. Topologically, residues Asn-272 to Gly-353 are cytoplasmic. The Zn(2+) site is built by Cys-298, Cys-301, Cys-319, and Cys-322. An RING-type; degenerate zinc finger spans residues Cys-298 to Gly-337.

Belongs to the pex2/pex10/pex12 family. As to quaternary structure, component of the PEX2-PEX10-PEX12 retrotranslocation channel.

The protein localises to the peroxisome membrane. It functions in the pathway protein modification; protein ubiquitination. In terms of biological role, component of a retrotranslocation channel required for peroxisome organization by mediating export of the PEX5 receptor from peroxisomes to the cytosol, thereby promoting PEX5 recycling. The retrotranslocation channel is composed of PEX2, PEX10 and PEX12; each subunit contributing transmembrane segments that coassemble into an open channel that specifically allows the passage of PEX5 through the peroxisomal membrane. PEX12 also regulates PEX5 recycling by activating the E3 ubiquitin-protein ligase activity of PEX10. When PEX5 recycling is compromised, PEX12 stimulates PEX10-mediated polyubiquitination of PEX5, leading to its subsequent degradation. This is Peroxisome assembly protein 12-B from Xenopus laevis (African clawed frog).